Here is an 894-residue protein sequence, read N- to C-terminus: Translation factor GUF1 homolog, mitochondrial (894 aa).

Positions 157–189 (EDEGLDGGPPPGMEAKKSSSSSSSNNVHSNCSD) are disordered. The segment covering 174-188 (SSSSSSSNNVHSNCS) has biased composition (low complexity). Residues 199–376 (ENIRNFCILA…RIVSEIPSPA (178 aa)) form the tr-type G domain. GTP contacts are provided by residues 208–215 (AHIDSGKS), 269–273 (DTPGH), and 323–326 (NKID). Positions 649 to 674 (DHDDCNDNGGSNSDDRSDRSGKNPPD) are disordered.

Belongs to the TRAFAC class translation factor GTPase superfamily. Classic translation factor GTPase family. LepA subfamily.

It localises to the mitochondrion inner membrane. The enzyme catalyses GTP + H2O = GDP + phosphate + H(+). In terms of biological role, promotes mitochondrial protein synthesis. May act as a fidelity factor of the translation reaction, by catalyzing a one-codon backward translocation of tRNAs on improperly translocated ribosomes. Binds to mitochondrial ribosomes in a GTP-dependent manner. The polypeptide is Translation factor GUF1 homolog, mitochondrial (Plasmodium knowlesi (strain H)).